The sequence spans 263 residues: L-erythrulose-1-phosphate isomerase (263 aa).

Residue His106 is the Electrophile of the active site. Glu178 functions as the Proton acceptor in the catalytic mechanism.

Belongs to the triosephosphate isomerase family.

The enzyme catalyses L-erythrulose 1-phosphate = D-erythrulose 4-phosphate. It participates in carbohydrate metabolism; L-threitol degradation. Functionally, catalyzes the isomerization of L-erythrulose-1P to D-erythrulose-4P. Involved in the degradation pathway of L-threitol, that allows M.smegmatis to grow on this compound as the sole carbon source. In Mycolicibacterium smegmatis (strain ATCC 700084 / mc(2)155) (Mycobacterium smegmatis), this protein is L-erythrulose-1-phosphate isomerase.